Here is a 345-residue protein sequence, read N- to C-terminus: MSTTTDFVGRNCPHCSAVDSLQTDDVMGEVACTACALVVAMGLEENVFTRYNENATYEDVDHHRERNANPTAATSAAGSLSAADPHMSSTSSKVVLHPTMLNCMRGLHKKAVLPEPVLDRGIELARAFVGGRRARGQRVERQPDVAAACLMIAAEEAQQPLPLAEVRCLDSSLGDVELRRADIVRELHLEDSERRLRDTFADNLLVKYILKLGLQVSLYLPHCKRLLTALGRVEALAGLTVADRVTTALLLARTAQTLSWEQGTHISKGKECDLGMEAIYANFSSKAHLEVTKVNKIMHLAVDVLPLIQAAFQDCGEPTAGKRKVDKNSEPEASGGTKRVKREET.

The TFIIB-type zinc-finger motif lies at 8–40 (VGRNCPHCSAVDSLQTDDVMGEVACTACALVVA). The Zn(2+) site is built by C12, C15, C32, and C35. Disordered regions lie at residues 59-89 (DVDH…HMSS) and 318-345 (PTAG…REET). Low complexity predominate over residues 71 to 83 (TAATSAAGSLSAA).

The protein belongs to the TFIIB family. In terms of assembly, monomer. Interacts with RNA polymerase II subunits RPB1 and RPB2. Interacts with TBP; the interaction is direct.

Its subcellular location is the nucleus. Its function is as follows. Specifically binds to the promoter of the spliced leader (SL) RNA gene and thus is essential for SLRNA transcription. This is Transcription initiation factor IIB from Trypanosoma brucei brucei.